The sequence spans 622 residues: Iron transport multicopper oxidase fio1 (622 aa).

The first 22 residues, M1 to A22, serve as a signal peptide directing secretion. The Extracellular portion of the chain corresponds to K23–K553. N-linked (GlcNAc...) asparagine glycosylation is found at N30 and N79. Plastocyanin-like domains lie at I49–N147 and T194–N304. Cu cation is bound by residues H85 and H87. N-linked (GlcNAc...) asparagine glycosylation is found at N117 and N123. Cu cation contacts are provided by H129 and H131. N-linked (GlcNAc...) asparagine glycans are attached at residues N198, N202, N234, N269, N296, N338, N360, and N376. Positions E386–A498 constitute a Plastocyanin-like 3 domain. Cu cation-binding residues include H417, H420, H422, H480, C481, H482, and H486. The N-linked (GlcNAc...) asparagine glycan is linked to N532. A helical membrane pass occupies residues A554–F574. The Cytoplasmic segment spans residues Y575–K622.

The protein belongs to the multicopper oxidase family. The cofactor is Cu cation.

The protein resides in the cell membrane. In terms of biological role, could be an iron transport multicopper oxidase, which is required for Fe(2+) high affinity uptake. May be required to oxidize Fe(2+) and release it from the transporter. Essential component of copper-dependent iron transport. The protein is Iron transport multicopper oxidase fio1 (fio1) of Schizosaccharomyces pombe (strain 972 / ATCC 24843) (Fission yeast).